We begin with the raw amino-acid sequence, 563 residues long: CTP synthase (563 aa).

Residues 1-280 are amidoligase domain; it reads MTKFVFVTGG…DEMICMKLQL (280 aa). Serine 13 contacts CTP. Residue serine 13 coordinates UTP. ATP-binding positions include 14-19 and aspartate 71; that span reads SLGKGI. Residues aspartate 71 and glutamate 154 each contribute to the Mg(2+) site. CTP is bound by residues 161–163, 201–206, and lysine 237; these read DIE and KTKPTQ. UTP contacts are provided by residues 201 to 206 and lysine 237; that span reads KTKPTQ. Residues 305 to 557 form the Glutamine amidotransferase type-1 domain; that stretch reads TIAMAGKYTE…IAAALEHHAA (253 aa). Residue glycine 366 participates in L-glutamine binding. Cysteine 393 serves as the catalytic Nucleophile; for glutamine hydrolysis. Residues 394 to 397, glutamate 417, and arginine 483 each bind L-glutamine; that span reads LGMQ. Residues histidine 530 and glutamate 532 contribute to the active site.

Belongs to the CTP synthase family. As to quaternary structure, homotetramer.

The enzyme catalyses UTP + L-glutamine + ATP + H2O = CTP + L-glutamate + ADP + phosphate + 2 H(+). The catalysed reaction is L-glutamine + H2O = L-glutamate + NH4(+). It carries out the reaction UTP + NH4(+) + ATP = CTP + ADP + phosphate + 2 H(+). The protein operates within pyrimidine metabolism; CTP biosynthesis via de novo pathway; CTP from UDP: step 2/2. With respect to regulation, allosterically activated by GTP, when glutamine is the substrate; GTP has no effect on the reaction when ammonia is the substrate. The allosteric effector GTP functions by stabilizing the protein conformation that binds the tetrahedral intermediate(s) formed during glutamine hydrolysis. Inhibited by the product CTP, via allosteric rather than competitive inhibition. Functionally, catalyzes the ATP-dependent amination of UTP to CTP with either L-glutamine or ammonia as the source of nitrogen. Regulates intracellular CTP levels through interactions with the four ribonucleotide triphosphates. The protein is CTP synthase of Leptothrix cholodnii (strain ATCC 51168 / LMG 8142 / SP-6) (Leptothrix discophora (strain SP-6)).